We begin with the raw amino-acid sequence, 805 residues long: Transforming acidic coiled-coil-containing protein 1 (805 aa).

A2 is modified (N-acetylalanine). A2 carries N-myristoyl glycine lipidation. Residues 2–55 (AFSPWQILSPVQWAKWTWSAVRGGAAGEDEAGGPEGDPEEEDSQAETKSLSFSS) form an interaction with LSM7 and SNRPG region. Phosphoserine occurs at positions 4, 10, and 44. The disordered stretch occupies residues 23–140 (RGGAAGEDEA…SVKNFREEPE (118 aa)). Acidic residues predominate over residues 28-45 (GEDEAGGPEGDPEEEDSQ). 2 stretches are compositionally biased toward polar residues: residues 47-60 (ETKS…SEGN) and 111-128 (SKTC…QAID). Basic and acidic residues predominate over residues 130-140 (HSVKNFREEPE). Residues S147 and S153 each carry the phosphoserine modification. The tract at residues 152-259 (FSIETKDSTD…TNAAVEGTPL (108 aa)) is interaction with TDRD7. The interval 206–427 (EASAEADLKA…DPDNFDESMD (222 aa)) is interaction with YEATS4. 2 SPAZ domains span residues 215–297 (AGNS…TPGT) and 359–507 (SKSA…TDEE). The segment at 215–457 (AGNSCPELVP…VNEILESPKK (243 aa)) is disordered. The Bipartite nuclear localization signal 1 signature appears at 226 to 241 (RRSKLRKPKPVPLRKK). Positions 226–242 (RRSKLRKPKPVPLRKKA) are enriched in basic residues. At S228 the chain carries Phosphoserine; by AURKC. A phosphoserine mark is found at S248 and S276. Composition is skewed to polar residues over residues 296–305 (GTLSSDTNDS), 377–413 (LSQT…SSEG), and 431–447 (PTTT…TGNH). 2 positions are modified to phosphoserine: S381 and S406. The Bipartite nuclear localization signal 2 motif lies at 455 to 471 (PKKAKSRLITSGCKVKK). A Phosphoserine modification is found at S483. The disordered stretch occupies residues 493–526 (ISDISNRDGHATDEEKLASTSCGQKSAGAEVKGE). Basic and acidic residues predominate over residues 497–509 (SNRDGHATDEEKL). The residue at position 533 (Y533) is a Phosphotyrosine. S591 carries the post-translational modification Phosphoserine. Positions 610-805 (IREEIITKEI…ELIAKLGKTD (196 aa)) form a coiled coil. An interaction with CH-TOG region spans residues 701 to 805 (VLEGFKKNEE…ELIAKLGKTD (105 aa)).

It belongs to the TACC family. As to quaternary structure, interacts with KIAA0097/CH-TOG and with the oncogenic transcription factor YEATS4. Interacts with AURKA, AURKB and AURKC. Interacts with LSM7, TDRD7 and SNRPG. Interacts with GCN5L2 and PCAF. Interacts with the thyroid hormone receptors THRB and THRA, predominantly with isoform alpha-2. The interaction with THRA isoform alpha-1 and THRB is decreased in the presence of thyroid hormone T3. Also interacts with other nuclear receptors, including ESR1, NR3C1, PPARG, RARA and RXRA, preferentially in the absence of their hormonal ligands. Isoform 1 is heavily phosphorylated; isoform 6 is not. Isoform 1, isoform 3 and isoform 5 are ubiquitous. Isoform 2 is strongly expressed in the brain, weakly detectable in lung and colon, and overexpressed in gastric cancer. Isoform 4 is not detected in normal tissues, but strong expression was found in gastric cancer tissues. Down-regulated in a subset of cases of breast cancer.

It localises to the cytoplasm. The protein localises to the nucleus. The protein resides in the cytoskeleton. It is found in the microtubule organizing center. Its subcellular location is the centrosome. It localises to the midbody. The protein localises to the membrane. Involved in transcription regulation induced by nuclear receptors, including in T3 thyroid hormone and all-trans retinoic acid pathways. Might promote the nuclear localization of the receptors. Likely involved in the processes that promote cell division prior to the formation of differentiated tissues. In Homo sapiens (Human), this protein is Transforming acidic coiled-coil-containing protein 1 (TACC1).